A 185-amino-acid polypeptide reads, in one-letter code: Peptide deformylase (185 aa).

Fe cation contacts are provided by Cys-94 and His-136. Glu-137 is a catalytic residue. His-140 is a Fe cation binding site.

This sequence belongs to the polypeptide deformylase family. The cofactor is Fe(2+).

It carries out the reaction N-terminal N-formyl-L-methionyl-[peptide] + H2O = N-terminal L-methionyl-[peptide] + formate. Removes the formyl group from the N-terminal Met of newly synthesized proteins. Requires at least a dipeptide for an efficient rate of reaction. N-terminal L-methionine is a prerequisite for activity but the enzyme has broad specificity at other positions. The protein is Peptide deformylase of Chlorobium limicola (strain DSM 245 / NBRC 103803 / 6330).